Consider the following 1719-residue polypeptide: Chromodomain-helicase-DNA-binding protein 1 (1719 aa).

The span at 1 to 10 (MNGHSDEESV) shows a compositional bias: basic and acidic residues. The tract at residues 1–249 (MNGHSDEESV…EAEETKTDSD (249 aa)) is disordered. A compositionally biased stretch (low complexity) spans 34–62 (SSGSSSDGSSSQSGSSDSESGSESGSQSE). Basic and acidic residues predominate over residues 66-85 (DTSREKKQVQAKPPKADGSE). Over residues 103–116 (KKQQQQQKAASSDS) the composition is skewed to low complexity. Acidic residues predominate over residues 117–133 (GSEEDSSSSEDSADDSS). Positions 149 to 160 (SGSGSVSGTGSD) are enriched in low complexity. Over residues 161 to 178 (SESEEDGDKSSCEESESD) the composition is skewed to acidic residues. Residues 184-207 (KVKSRKPPSRIKPKSGKKSTGQKK) show a composition bias toward basic residues. Residues 212–222 (SSEEEEDDDED) show a composition bias toward acidic residues. The segment covering 239–248 (KEAEETKTDS) has biased composition (basic and acidic residues). Chromo domains follow at residues 268 to 360 (ETIE…RWLK) and 385 to 448 (QIVE…TPFK). In terms of domain architecture, Helicase ATP-binding spans 489-659 (AHSWCKGNSC…WSLLHFIMPE (171 aa)). Residue 502–509 (DEMGLGKT) participates in ATP binding. The DEAH box motif lies at 610-613 (DEAH). A Helicase C-terminal domain is found at 788–939 (LLDKLLIRLR…HLVIQRMDTT (152 aa)). 3 disordered regions span residues 1076–1116 (ISFN…TIPR), 1319–1393 (QRLA…TPVH), and 1503–1719 (KKRQ…SRKT). Basic residues-rich tracts occupy residues 1103-1113 (KRPKKRGRPRT) and 1327-1342 (SKRRKTRNKKNKMKAS). A compositionally biased stretch (basic and acidic residues) spans 1369–1380 (NKVNEIKSENKE). Residues 1410–1512 (LDQKTFSVCK…KKRQESQQHN (103 aa)) are CHD1 helical C-terminal domain (CHCT). The segment covering 1511–1524 (HNDQNISSNVNTHV) has biased composition (polar residues). Basic and acidic residues-rich tracts occupy residues 1526 to 1576 (RNPD…DSRK), 1585 to 1673 (GKDH…DHRA), and 1698 to 1710 (SPFEHSSDHKSTP).

Belongs to the SNF2/RAD54 helicase family. Component of the SAGA complex. Interacts with SSRP1.

Its subcellular location is the nucleus. The protein resides in the chromosome. It is found in the centromere. It carries out the reaction ATP + H2O = ADP + phosphate + H(+). Its function is as follows. ATP-dependent chromatin-remodeling factor which functions as substrate recognition component of the transcription regulatory histone acetylation (HAT) complex SAGA. Regulates polymerase II transcription. Also required for efficient transcription by RNA polymerase I, and more specifically the polymerase I transcription termination step. Regulates negatively DNA replication. Not only involved in transcription-related chromatin remodeling, but also required to maintain a specific chromatin configuration across the genome. Required for maintaining open chromatin and pluripotency in embryonic stem cells. Required for centromeric localization of CENPA. The chain is Chromodomain-helicase-DNA-binding protein 1 (CHD1) from Gallus gallus (Chicken).